Consider the following 233-residue polypeptide: DNA repair protein RecO (233 aa).

This sequence belongs to the RecO family.

In terms of biological role, involved in DNA repair and RecF pathway recombination. The sequence is that of DNA repair protein RecO from Francisella philomiragia subsp. philomiragia (strain ATCC 25017 / CCUG 19701 / FSC 153 / O#319-036).